Here is a 1838-residue protein sequence, read N- to C-terminus: Collagen alpha-1(V) chain (1838 aa).

Residues 1 to 37 (MDVHTRWKARSALRPGAPLLPPLLLLLLWAPPPSRAA) form the signal peptide. The Laminin G-like domain occupies 72–244 (DVAYRVTKDA…DYCEHYSPDC (173 aa)). Residues 231 to 443 (RAAYDYCEHY…MPANQDTIYE (213 aa)) form a nonhelical region region. Sulfotyrosine is present on residues Tyr234, Tyr236, Tyr240, Tyr262, and Tyr263. Disordered stretches follow at residues 242-269 (PDCD…GDGE), 281-457 (EDPE…QKGE), 470-520 (PPGP…GTML), 526-545 (FGGG…QESQ), and 559-1574 (GPAG…EVIQ). Residues 258-269 (NPDEYYTEGDGE) show a composition bias toward acidic residues. Positions 285–304 (DLGKEPTPSKKPVEAAKETT) are enriched in basic and acidic residues. Positions 309 to 323 (ELTPTPTEAAPMPET) are enriched in low complexity. Residues Tyr338, Tyr340, Tyr346, and Tyr347 each carry the sulfotyrosine modification. Positions 377-388 (PTSTADTSNSSN) are enriched in polar residues. Residues 396-406 (GADDLEGEFTE) are compositionally biased toward acidic residues. Sulfotyrosine occurs at positions 416, 417, 420, and 421. Low complexity predominate over residues 417-428 (YDPYYDPTSSPS). An interrupted collagenous region region spans residues 444–558 (GIGGPRGEKG…ILQQARLALR (115 aa)). A compositionally biased stretch (pro residues) spans 470–485 (PPGPEGPAGLPGPPGT). A compositionally biased stretch (low complexity) spans 506–520 (LPGADGLPGPPGTML). Positions 559–1570 (GPAGPMGLTG…GPPGPPGPPG (1012 aa)) are triple-helical region. A hydroxyproline mark is found at Pro570 and Pro576. A compositionally biased stretch (low complexity) spans 587–597 (DVGPQGPRGVQ). Residue Pro621 is modified to Hydroxyproline. Lys627 is modified (5-hydroxylysine). Pro639 bears the Hydroxyproline mark. Lys642 carries the post-translational modification 5-hydroxylysine. A hydroxyproline mark is found at Pro648, Pro654, Pro657, Pro675, and Pro678. Residues 671–686 (PRGLPGEPGPRGLLGP) show a composition bias toward low complexity. Lys687 bears the 5-hydroxylysine mark. Residues 687-696 (KGPPGPPGPP) are compositionally biased toward pro residues. Pro690, Pro696, and Pro705 each carry hydroxyproline. A 5-hydroxylysine modification is found at Lys708. Pro717, Pro720, Pro726, and Pro732 each carry hydroxyproline. The span at 722–741 (QQGNPGAQGLPGPQGAIGPP) shows a compositional bias: low complexity. Lys744 bears the 5-hydroxylysine mark. Positions 747-756 (LGKPGLPGMP) are enriched in low complexity. Pro750, Pro756, Pro762, Pro765, and Pro771 each carry hydroxyproline. A 5-hydroxylysine modification is found at Lys774. A hydroxyproline mark is found at Pro780 and Pro789. Lys795, Lys804, Lys807, and Lys810 each carry 5-hydroxylysine. Hydroxyproline is present on Pro816. Residue Lys819 is modified to 5-hydroxylysine. A Hydroxyproline modification is found at Pro834. Residues 837–846 (RGEDGPEGPK) are compositionally biased toward basic and acidic residues. At Lys846 the chain carries 5-hydroxylysine. Pro861 bears the Hydroxyproline mark. The residue at position 864 (Lys864) is a 5-hydroxylysine. The span at 867–876 (LGVPGLPGYP) shows a compositional bias: low complexity. Hydroxyproline occurs at positions 870, 873, and 876. Lys882 carries the 5-hydroxylysine modification. Hydroxyproline occurs at positions 888 and 891. Lys897 is modified (5-hydroxylysine). A hydroxyproline mark is found at Pro903 and Pro906. A compositionally biased stretch (low complexity) spans 908–917 (PRGQRGPTGP). Residues Pro930 and Pro945 each carry the hydroxyproline modification. Low complexity-rich tracts occupy residues 971–990 (KDGL…QGKT) and 999–1011 (VGPQ…TGPM). 4 positions are modified to hydroxyproline: Pro1017, Pro1020, Pro1023, and Pro1029. The segment covering 1088–1104 (SPGERGPAGAAGPIGIP) has biased composition (low complexity). Residues 1106 to 1115 (RPGPQGPPGP) are compositionally biased toward pro residues. Over residues 1116–1140 (AGEKGAPGEKGPQGPAGRDGLQGPV) the composition is skewed to low complexity. Residues Pro1221 and Pro1224 each carry the hydroxyproline modification. The segment covering 1259–1268 (PSGAPGADGP) has biased composition (low complexity). Pro residues-rich tracts occupy residues 1380–1398 (TGEP…PGPA) and 1454–1469 (SPGP…PPGL). 2 positions are modified to hydroxyproline: Pro1467 and Pro1470. Residues 1485–1494 (PGLIGLIGPP) show a composition bias toward low complexity. Residues 1526 to 1541 (PIGPPGPPGLPGPPGP) show a composition bias toward pro residues. Low complexity predominate over residues 1542 to 1554 (KGAKGSSGPTGPK). Positions 1560 to 1569 (PGPPGPPGPP) are enriched in pro residues. A nonhelical region region spans residues 1571–1605 (EVIQPLPIQASRTRRNIDASQLLDDGNGENYVDYA). 2 positions are modified to sulfotyrosine: Tyr1601 and Tyr1604. A propeptide spans 1606–1838 (DGMEEIFGSL…FEVGPACFMG (233 aa)) (C-terminal propeptide). In terms of domain architecture, Fibrillar collagen NC1 spans 1609-1837 (EEIFGSLNSL…GFEVGPACFM (229 aa)). Intrachain disulfides connect Cys1639-Cys1671, Cys1680-Cys1835, and Cys1746-Cys1789. 5 residues coordinate Ca(2+): Asp1657, Asn1659, Gln1660, Cys1662, and Asp1665.

It belongs to the fibrillar collagen family. As to quaternary structure, trimers of two alpha 1(V) and one alpha 2(V) chains in most tissues and trimers of one alpha 1(V), one alpha 2(V), and one alpha 3(V) chains in placenta. Interacts with CSPG4. Prolines at the third position of the tripeptide repeating unit (G-X-Y) are hydroxylated in some or all of the chains. In terms of processing, sulfated on 40% of tyrosines.

Its subcellular location is the secreted. The protein localises to the extracellular space. It localises to the extracellular matrix. In terms of biological role, type V collagen is a member of group I collagen (fibrillar forming collagen). It is a minor connective tissue component of nearly ubiquitous distribution. Type V collagen binds to DNA, heparan sulfate, thrombospondin, heparin, and insulin. In Homo sapiens (Human), this protein is Collagen alpha-1(V) chain (COL5A1).